Consider the following 479-residue polypeptide: Wax ester synthase/diacylglycerol acyltransferase 2 (479 aa).

The Cytoplasmic portion of the chain corresponds to 1 to 182 (MAIERQVTEA…VAPKKNKAKN (182 aa)). The Proton acceptor role is filled by His-144. The chain crosses the membrane as a helical span at residues 183-199 (VCFSLVAWLWFIVRLMF). At 200-479 (HTCVEVIKSI…PKKVFHASKV (280 aa)) the chain is on the lumenal side. A glycan (N-linked (GlcNAc...) asparagine) is linked at Asn-253.

The protein in the N-terminal section; belongs to the long-chain O-acyltransferase family. As to expression, mostly expressed in flowers and siliques and barely in roots and stems.

The protein resides in the cell membrane. It is found in the endoplasmic reticulum membrane. It carries out the reaction an acyl-CoA + a 1,2-diacyl-sn-glycerol = a triacyl-sn-glycerol + CoA. The catalysed reaction is a long chain fatty alcohol + a fatty acyl-CoA = a wax ester + CoA. It participates in glycerolipid metabolism; triacylglycerol biosynthesis. The protein operates within lipid metabolism. Bifunctional wax ester synthase/diacylglycerol acyltransferase. Involved in cuticular wax biosynthesis. This is Wax ester synthase/diacylglycerol acyltransferase 2 from Arabidopsis thaliana (Mouse-ear cress).